Here is a 614-residue protein sequence, read N- to C-terminus: DNA mismatch repair protein MutL (614 aa).

The interval 355 to 411 (PLSTGRVSEADPSNYATQSKFDEKPRESGSQGQSSSISAPSSYSRGGEYSARSQPEL) is disordered. Low complexity predominate over residues 382–401 (SGSQGQSSSISAPSSYSRGG).

Belongs to the DNA mismatch repair MutL/HexB family.

Functionally, this protein is involved in the repair of mismatches in DNA. It is required for dam-dependent methyl-directed DNA mismatch repair. May act as a 'molecular matchmaker', a protein that promotes the formation of a stable complex between two or more DNA-binding proteins in an ATP-dependent manner without itself being part of a final effector complex. This Shewanella woodyi (strain ATCC 51908 / MS32) protein is DNA mismatch repair protein MutL.